The primary structure comprises 584 residues: Arginine--tRNA ligase (584 aa).

The 'HIGH' region signature appears at 127–137 (PNTNKPLHVGH).

It belongs to the class-I aminoacyl-tRNA synthetase family. In terms of assembly, monomer.

Its subcellular location is the cytoplasm. The catalysed reaction is tRNA(Arg) + L-arginine + ATP = L-arginyl-tRNA(Arg) + AMP + diphosphate. This Borrelia turicatae (strain 91E135) protein is Arginine--tRNA ligase.